Consider the following 254-residue polypeptide: Uracil-DNA glycosylase (254 aa).

D78 acts as the Proton acceptor in catalysis.

It belongs to the uracil-DNA glycosylase (UDG) superfamily. UNG family.

The protein resides in the cytoplasm. The enzyme catalyses Hydrolyzes single-stranded DNA or mismatched double-stranded DNA and polynucleotides, releasing free uracil.. Functionally, excises uracil residues from the DNA which can arise as a result of misincorporation of dUMP residues by DNA polymerase or due to deamination of cytosine. The polypeptide is Uracil-DNA glycosylase (Bordetella petrii (strain ATCC BAA-461 / DSM 12804 / CCUG 43448)).